The chain runs to 557 residues: Formate--tetrahydrofolate ligase 2 (557 aa).

66–73 (TPAGEGKT) lines the ATP pocket.

This sequence belongs to the formate--tetrahydrofolate ligase family.

The enzyme catalyses (6S)-5,6,7,8-tetrahydrofolate + formate + ATP = (6R)-10-formyltetrahydrofolate + ADP + phosphate. It functions in the pathway one-carbon metabolism; tetrahydrofolate interconversion. The sequence is that of Formate--tetrahydrofolate ligase 2 from Streptococcus pyogenes serotype M12 (strain MGAS9429).